The sequence spans 180 residues: 3-hydroxyanthranilate 3,4-dioxygenase (180 aa).

Arg46 serves as a coordination point for O2. Positions 50, 56, and 94 each coordinate Fe cation. Glu56 is a substrate binding site. Substrate contacts are provided by Arg98 and Glu109. 4 residues coordinate Fe cation: Cys124, Cys127, Cys161, and Cys164.

This sequence belongs to the 3-HAO family. In terms of assembly, homodimer. It depends on Fe(2+) as a cofactor.

It catalyses the reaction 3-hydroxyanthranilate + O2 = (2Z,4Z)-2-amino-3-carboxymuconate 6-semialdehyde. It functions in the pathway cofactor biosynthesis; NAD(+) biosynthesis; quinolinate from L-kynurenine: step 3/3. Its function is as follows. Catalyzes the oxidative ring opening of 3-hydroxyanthranilate to 2-amino-3-carboxymuconate semialdehyde, which spontaneously cyclizes to quinolinate. The sequence is that of 3-hydroxyanthranilate 3,4-dioxygenase from Jannaschia sp. (strain CCS1).